The sequence spans 641 residues: FACT complex subunit SSRP1-A (641 aa).

Residues 459–561 (TDDDAVDPHL…DPNAPKRAMT (103 aa)) are disordered. Over residues 476-487 (GDEESDEEDEDF) the composition is skewed to acidic residues. The span at 512–524 (GGEKEKLSKKEAS) shows a compositional bias: basic and acidic residues. A DNA-binding region (HMG box) is located at residues 556 to 624 (PKRAMTPFMY…RYEKESAVYR (69 aa)).

Belongs to the SSRP1 family. In terms of assembly, component of the FACT complex, a stable heterodimer of SPT16 and SSRP1.

The protein resides in the nucleus. The protein localises to the chromosome. Functionally, component of the FACT complex, a general chromatin factor that acts to reorganize nucleosomes. The FACT complex is involved in multiple processes that require DNA as a template such as mRNA elongation, DNA replication and DNA repair. During transcription elongation the FACT complex acts as a histone chaperone that both destabilizes and restores nucleosomal structure. It facilitates the passage of RNA polymerase II and transcription by promoting the dissociation of one histone H2A-H2B dimer from the nucleosome, then subsequently promotes the reestablishment of the nucleosome following the passage of RNA polymerase II. Binds specifically to double-stranded DNA. This is FACT complex subunit SSRP1-A (SSRP1-A) from Oryza sativa subsp. japonica (Rice).